The chain runs to 449 residues: Putative methylthiotransferase MJ0865 (449 aa).

In terms of domain architecture, Radical SAM core spans 163 to 390 (SIRGANVYIE…EGEYRKLGLS (228 aa)). Residues cysteine 177, cysteine 181, and cysteine 184 each coordinate [4Fe-4S] cluster.

The protein belongs to the methylthiotransferase family. Requires [4Fe-4S] cluster as cofactor.

This is Putative methylthiotransferase MJ0865 from Methanocaldococcus jannaschii (strain ATCC 43067 / DSM 2661 / JAL-1 / JCM 10045 / NBRC 100440) (Methanococcus jannaschii).